Consider the following 311-residue polypeptide: tRNA dimethylallyltransferase (311 aa).

12 to 19 (GPTASGKT) contributes to the ATP binding site. Residue 14–19 (TASGKT) coordinates substrate. Interaction with substrate tRNA regions lie at residues 37-40 (DSAM) and 161-165 (QRIQR).

This sequence belongs to the IPP transferase family. Monomer. The cofactor is Mg(2+).

It carries out the reaction adenosine(37) in tRNA + dimethylallyl diphosphate = N(6)-dimethylallyladenosine(37) in tRNA + diphosphate. Its function is as follows. Catalyzes the transfer of a dimethylallyl group onto the adenine at position 37 in tRNAs that read codons beginning with uridine, leading to the formation of N6-(dimethylallyl)adenosine (i(6)A). This chain is tRNA dimethylallyltransferase, found in Coxiella burnetii (strain RSA 331 / Henzerling II).